A 256-amino-acid polypeptide reads, in one-letter code: MIKRVNKLVLGISLLFLVISITAGCDMGKEEEIKKSFEKTLSMYPIKNLEDLYDKEGYRDDQFDKNDKGTWIIGSEMATQNKGEALKVKGMVLYMNRNTRSAKGFYYVNAVKKDEDGRPQDNKIEYPVKMVDNKIIPTKDIKDGNIKKEIENFKFFAQYGTFKDLSKYKDGDISYNPEVPSYSAKYQLTNDDYNVKQLRKRYDIPTNKAPKLLLKGSGDLKGSSVGYKDIEFTFVEKKGENTFFTDSLHLEPSEDK.

A signal peptide spans 1 to 24 (MIKRVNKLVLGISLLFLVISITAG). The N-palmitoyl cysteine moiety is linked to residue Cys25. Residue Cys25 is the site of S-diacylglycerol cysteine attachment.

The protein belongs to the staphylococcal tandem lipoprotein family.

Its subcellular location is the cell membrane. This is an uncharacterized protein from Staphylococcus aureus.